Consider the following 379-residue polypeptide: MSEQRDSRGMPQAGFIIEHQSSDHKWKVLRNIYSGPFSDVYVVADTVTNEKYAMKCERQEGNSRPVLKLDVMVLMATKGLRGFPNFVAAGRTDVYRYCIMQLVGPDLGRLRRTRPERKFSLPTALQILGQTLRRLEDLHNCGWLCRDVKAPNFCIGVGENESTVYILDFGFARKFVDKEGKIIPPRTAAALMGTFQYCAVSAHSHKDQCARDDLESWFYMGIELLKGPLPWANIDGHKNHKQIGEAKVAIRSEPLRSEFFEGVPKQFNEILTILDQTSYFDRPNYKKLGDLLSQAATEHQVTLKEPLDWQNNERMQQKAIFVGELGESHQASAKLDAKDNANESMDIEFDDMPPKEGISKSLSAEKSCTKNVETARTEK.

The Protein kinase domain occupies 26-302; sequence WKVLRNIYSG…SQAATEHQVT (277 aa). Residues 32–40 and lysine 55 each bind ATP; that span reads IYSGPFSDV. The Proton acceptor role is filled by aspartate 147. The disordered stretch occupies residues 331 to 379; it reads ASAKLDAKDNANESMDIEFDDMPPKEGISKSLSAEKSCTKNVETARTEK. Over residues 360-372 the composition is skewed to polar residues; sequence KSLSAEKSCTKNV.

The protein belongs to the protein kinase superfamily. CK1 Ser/Thr protein kinase family.

It carries out the reaction L-seryl-[protein] + ATP = O-phospho-L-seryl-[protein] + ADP + H(+). The catalysed reaction is L-threonyl-[protein] + ATP = O-phospho-L-threonyl-[protein] + ADP + H(+). Serine/threonine-protein kinase which is involved in spermatogenesis. In spermatocytes, regulates meiosis and the localization and assembly of major sperm protein (MSP) into fibrous bodies. In addition, may suppress the initiation of spermiogenesis downstream of spe-8, spe-12, spe-27 and spe-29. The chain is Serine/threonine-protein kinase spe-6 from Caenorhabditis elegans.